The chain runs to 692 residues: Elongation factor G (692 aa).

The tr-type G domain occupies 8 to 282; sequence ENTRNIGIMA…AVIDYLPSPL (275 aa). GTP is bound by residues 17 to 24, 81 to 85, and 135 to 138; these read AHIDAGKT, DTPGH, and NKMD.

The protein belongs to the TRAFAC class translation factor GTPase superfamily. Classic translation factor GTPase family. EF-G/EF-2 subfamily.

The protein resides in the cytoplasm. Catalyzes the GTP-dependent ribosomal translocation step during translation elongation. During this step, the ribosome changes from the pre-translocational (PRE) to the post-translocational (POST) state as the newly formed A-site-bound peptidyl-tRNA and P-site-bound deacylated tRNA move to the P and E sites, respectively. Catalyzes the coordinated movement of the two tRNA molecules, the mRNA and conformational changes in the ribosome. This is Elongation factor G from Bacillus cereus (strain G9842).